Consider the following 435-residue polypeptide: Acetyltransferase atnC (435 aa).

The next 3 membrane-spanning stretches (helical) occupy residues 10 to 30 (AFAN…FLII), 40 to 60 (YFGI…APTL), and 68 to 88 (SFLA…LLIL). Residue N203 is glycosylated (N-linked (GlcNAc...) asparagine). A run of 3 helical transmembrane segments spans residues 306-326 (FLVF…MGLS), 333-353 (IPYF…QAFY), and 370-390 (VVGF…YMFP). A glycan (N-linked (GlcNAc...) asparagine) is linked at N406. A helical transmembrane segment spans residues 407-427 (LTEVIGMPMMWGLLGTFGMLV).

The protein belongs to the wax synthase family.

The protein localises to the membrane. It participates in secondary metabolite biosynthesis; terpenoid biosynthesis. Its function is as follows. Acetyltransferase; part of the gene cluster that mediates the biosynthesis of the meroterpenoids arthripenoids. The pathway begins with the HR-PKS atnH that catalyzes two chain-extension steps to form a reduced triketide, which then primes the SAT domain in the NR-PKS atnG to initiate three more cycles of extension to give a linear hexaketide corresponding to the polyketide part of arthripenoids. The FAD-dependent monooxygenase atnJ then performs an oxidative decarboxylation at C11 of the atnH/atnG product, via an electrophilic aromatic hydroxylation with concomitant ipso-decarboxylation. The membrane-bound polyprenyl transferase atnF then introduces a farnesyl group before the FAD-dependent monooxygenase atnK functions as the first epoxidase on terminal C12'-C13' olefin, followed by a second epoxidation on C7'-C8' catalyzed by atnA. The terpene cyclase/mutase atnI then initiates the sequential tricyclic ring formation through protonation of the terminal epoxide and catalyzes the regioselective and stereoselective 6/6/6-tricyclic ring formation. The cytochrome P450 monooxygenase atnM is responsible for hydroxylating both C1' and C10'. The next steps may involve ketoreduction and acetyl transfer by the ketoreductase atnB and the acetyltransferase atnC, and lead to the production of arthripenoid B, the final biosynthetic product of the atn cluster. The hydroquinone moiety in arthripenoid B is prone to undergo spontaneous oxidation to afford a benzoquinone compound, a key intermediate for generating structure diversity. For instance, addition of a cysteine followed by ring contraction gives arthripenoid A, tautomerization gives the main product arthripenoid C, addition of a molecular of water or amine affords arthripenoid D or E, respectively, and loss of one water forms arthripenoid F. This Arthrinium sp protein is Acetyltransferase atnC.